A 365-amino-acid polypeptide reads, in one-letter code: sn-glycerol-3-phosphate import ATP-binding protein UgpC (365 aa).

Residues 4-234 form the ABC transporter domain; sequence LSLRNVQKHY…PASTFVAGFI (231 aa). 36–43 serves as a coordination point for ATP; it reads GPSGCGKS.

It belongs to the ABC transporter superfamily. sn-glycerol-3-phosphate importer (TC 3.A.1.1.3) family. The complex is composed of two ATP-binding proteins (UgpC), two transmembrane proteins (UgpA and UgpE) and a solute-binding protein (UgpB).

It is found in the cell inner membrane. It catalyses the reaction sn-glycerol 3-phosphate(out) + ATP + H2O = sn-glycerol 3-phosphate(in) + ADP + phosphate + H(+). Functionally, part of the ABC transporter complex UgpBAEC involved in sn-glycerol-3-phosphate (G3P) import. Responsible for energy coupling to the transport system. This chain is sn-glycerol-3-phosphate import ATP-binding protein UgpC, found in Ralstonia nicotianae (strain ATCC BAA-1114 / GMI1000) (Ralstonia solanacearum).